We begin with the raw amino-acid sequence, 369 residues long: tRNA/tmRNA (uracil-C(5))-methyltransferase (369 aa).

Residues Gln193, Tyr221, Asn226, Glu242, and Asp302 each coordinate S-adenosyl-L-methionine. Cys327 serves as the catalytic Nucleophile. The active-site Proton acceptor is Glu361.

Belongs to the class I-like SAM-binding methyltransferase superfamily. RNA M5U methyltransferase family. TrmA subfamily.

The catalysed reaction is uridine(54) in tRNA + S-adenosyl-L-methionine = 5-methyluridine(54) in tRNA + S-adenosyl-L-homocysteine + H(+). It catalyses the reaction uridine(341) in tmRNA + S-adenosyl-L-methionine = 5-methyluridine(341) in tmRNA + S-adenosyl-L-homocysteine + H(+). In terms of biological role, dual-specificity methyltransferase that catalyzes the formation of 5-methyluridine at position 54 (m5U54) in all tRNAs, and that of position 341 (m5U341) in tmRNA (transfer-mRNA). The polypeptide is tRNA/tmRNA (uracil-C(5))-methyltransferase (Sulfurimonas denitrificans (strain ATCC 33889 / DSM 1251) (Thiomicrospira denitrificans (strain ATCC 33889 / DSM 1251))).